The following is a 971-amino-acid chain: Outer capsid protein VP2 (971 aa).

The protein belongs to the orbivirus VP2 family.

It localises to the virion. The VP2 protein is one of the two proteins (with VP5) which constitute the virus particle outer capsid. It is the major target of the host immunogenic response. This chain is Outer capsid protein VP2 (Segment-2), found in Epizootic hemorrhagic disease virus 1 (EHDV-1).